A 300-amino-acid polypeptide reads, in one-letter code: Putative glycosyltransferase ORF300 (300 aa).

This sequence belongs to the glycosyltransferase group 1 family. Glycosyltransferase 4 subfamily.

In Acidianus hospitalis (AFV-1), this protein is Putative glycosyltransferase ORF300.